We begin with the raw amino-acid sequence, 399 residues long: Galactokinase (399 aa).

42–45 (EHTD) lines the substrate pocket. ATP is bound by residues serine 76 and 133–139 (ASGLSSS). Serine 139 and glutamate 171 together coordinate Mg(2+). Residue aspartate 183 is the Proton acceptor of the active site. Tyrosine 233 provides a ligand contact to substrate.

It belongs to the GHMP kinase family. GalK subfamily.

It localises to the cytoplasm. It catalyses the reaction alpha-D-galactose + ATP = alpha-D-galactose 1-phosphate + ADP + H(+). It functions in the pathway carbohydrate metabolism; galactose metabolism. Catalyzes the transfer of the gamma-phosphate of ATP to D-galactose to form alpha-D-galactose-1-phosphate (Gal-1-P). The sequence is that of Galactokinase from Lactococcus lactis subsp. cremoris (strain MG1363).